A 464-amino-acid chain; its full sequence is Dihydrolipoyl dehydrogenase (464 aa).

FAD is bound by residues 36–44 (EGAALGGTC), Lys-53, and Ala-119. A disulfide bridge links Cys-44 with Cys-49. NAD(+) is bound by residues 184–188 (GGGYI), Glu-207, and 269–272 (AVGR). FAD-binding residues include Asp-311 and Ala-319. The Proton acceptor role is filled by His-443.

This sequence belongs to the class-I pyridine nucleotide-disulfide oxidoreductase family. As to quaternary structure, homodimer. The cofactor is FAD.

The protein resides in the cytoplasm. The enzyme catalyses N(6)-[(R)-dihydrolipoyl]-L-lysyl-[protein] + NAD(+) = N(6)-[(R)-lipoyl]-L-lysyl-[protein] + NADH + H(+). In terms of biological role, the branched-chain alpha-keto dehydrogenase complex catalyzes the overall conversion of alpha-keto acids to acyl-CoA and CO(2). It contains multiple copies of 3 enzymatic components: branched-chain alpha-keto acid decarboxylase (E1), lipoamide acyltransferase (E2) and lipoamide dehydrogenase (E3). The protein is Dihydrolipoyl dehydrogenase of Pseudomonas aeruginosa (strain ATCC 15692 / DSM 22644 / CIP 104116 / JCM 14847 / LMG 12228 / 1C / PRS 101 / PAO1).